The following is a 1079-amino-acid chain: Alpha-mannosidase C (1079 aa).

Residues 1–22 form the signal peptide; the sequence is MFYKTFGFLFIYLIILISGTLS. 2 residues coordinate Zn(2+): His-44 and Asp-46. N-linked (GlcNAc...) asparagine glycans are attached at residues Asn-60 and Asn-96. Asp-158 is a Zn(2+) binding site. Asp-158 functions as the Nucleophile in the catalytic mechanism. N-linked (GlcNAc...) asparagine glycans are attached at residues Asn-192, Asn-222, Asn-248, and Asn-467. Residue His-475 coordinates Zn(2+). 10 N-linked (GlcNAc...) asparagine glycosylation sites follow: Asn-516, Asn-527, Asn-589, Asn-760, Asn-769, Asn-848, Asn-872, Asn-912, Asn-1040, and Asn-1057.

This sequence belongs to the glycosyl hydrolase 38 family. Zn(2+) serves as cofactor.

It is found in the secreted. It carries out the reaction Hydrolysis of terminal, non-reducing alpha-D-mannose residues in alpha-D-mannosides.. This Dictyostelium discoideum (Social amoeba) protein is Alpha-mannosidase C (manC).